The following is a 671-amino-acid chain: TBC1 domain family member 15 (671 aa).

At Ala2 the chain carries N-acetylalanine. Ser23, Ser32, Ser70, Ser205, and Ser257 each carry phosphoserine. The region spanning 329–539 (GLSHSLRKQA…RLWEVMWTEL (211 aa)) is the Rab-GAP TBC domain. A phosphoserine mark is found at Ser623 and Ser655. The interval 650–671 (EAKDDSPTQTLASPNACRLTPA) is disordered. Thr669 carries the phosphothreonine modification.

Interacts with non-phosphorylated form of RAB8A; phosphorylation of RAB8A at 'Thr-72' disrupts this interaction. Interacts with ARMC12. Ubiquitous, with highest expression in heart, liver and testis and lower expression in brain, spleen, lung, kidney and skeletal muscle.

The protein localises to the cytoplasm. Its function is as follows. Acts as a GTPase activating protein for RAB7A. Does not act on RAB4, RAB5 or RAB6. This chain is TBC1 domain family member 15 (Tbc1d15), found in Mus musculus (Mouse).